The following is a 577-amino-acid chain: Arginine--tRNA ligase (577 aa).

The 'HIGH' region signature appears at A132 to H142.

It belongs to the class-I aminoacyl-tRNA synthetase family. In terms of assembly, monomer.

The protein localises to the cytoplasm. It carries out the reaction tRNA(Arg) + L-arginine + ATP = L-arginyl-tRNA(Arg) + AMP + diphosphate. The chain is Arginine--tRNA ligase from Janthinobacterium sp. (strain Marseille) (Minibacterium massiliensis).